The sequence spans 153 residues: Transcriptional repressor NrdR (153 aa).

Residues 3 to 34 fold into a zinc finger; it reads CPSCQHHGTRVLDSRPVDEGRSIRRRRECEQC. The ATP-cone domain occupies 49–139; it reads LIVVKKQGMR…VYRQFKDLNV (91 aa).

The protein belongs to the NrdR family. Zn(2+) is required as a cofactor.

In terms of biological role, negatively regulates transcription of bacterial ribonucleotide reductase nrd genes and operons by binding to NrdR-boxes. This is Transcriptional repressor NrdR from Geobacillus sp. (strain WCH70).